The following is a 493-amino-acid chain: Mitochondrial distribution and morphology protein 10 (493 aa).

The protein belongs to the MDM10 family. As to quaternary structure, component of the ER-mitochondria encounter structure (ERMES) or MDM complex, composed of MMM1, MDM10, MDM12 and MDM34. Associates with the mitochondrial outer membrane sorting assembly machinery SAM(core) complex, which consists of SAM35, SAM37 and SAM50, to form a SAM(holo) complex.

The protein localises to the mitochondrion outer membrane. Its function is as follows. Component of the ERMES/MDM complex, which serves as a molecular tether to connect the endoplasmic reticulum and mitochondria. Components of this complex are involved in the control of mitochondrial shape and protein biogenesis and may function in phospholipid exchange. MDM10 is involved in the late assembly steps of the general translocase of the mitochondrial outer membrane (TOM complex). Functions in the TOM40-specific route of the assembly of outer membrane beta-barrel proteins, including the association of TOM40 with the receptor TOM22 and small TOM proteins. Can associate with the SAM(core) complex as well as the MDM12-MMM1 complex, both involved in late steps of the major beta-barrel assembly pathway, that is responsible for biogenesis of all outer membrane beta-barrel proteins. May act as a switch that shuttles between both complexes and channels precursor proteins into the TOM40-specific pathway. Plays a role in mitochondrial morphology and in the inheritance of mitochondria. The polypeptide is Mitochondrial distribution and morphology protein 10 (Saccharomyces cerevisiae (strain RM11-1a) (Baker's yeast)).